We begin with the raw amino-acid sequence, 553 residues long: CTP synthase (553 aa).

An amidoligase domain region spans residues 1 to 278 (MVRRTHGNSQ…DAYVVRELGL (278 aa)). Residue Ser-25 participates in CTP binding. Ser-25 serves as a coordination point for UTP. ATP is bound by residues 26–31 (SLGKGL) and Asp-83. Mg(2+) is bound by residues Asp-83 and Glu-152. Residues 159-161 (DIE), 199-204 (KTKPTQ), and Lys-235 each bind CTP. Residues 199 to 204 (KTKPTQ) and Lys-235 contribute to the UTP site. Positions 303-552 (NIAIVGKYID…VKAALDHQAA (250 aa)) constitute a Glutamine amidotransferase type-1 domain. Gly-366 provides a ligand contact to L-glutamine. The Nucleophile; for glutamine hydrolysis role is filled by Cys-393. L-glutamine-binding positions include 394 to 397 (LGLQ), Glu-417, and Arg-478. Active-site residues include His-525 and Glu-527.

The protein belongs to the CTP synthase family. As to quaternary structure, homotetramer.

The enzyme catalyses UTP + L-glutamine + ATP + H2O = CTP + L-glutamate + ADP + phosphate + 2 H(+). The catalysed reaction is L-glutamine + H2O = L-glutamate + NH4(+). It catalyses the reaction UTP + NH4(+) + ATP = CTP + ADP + phosphate + 2 H(+). The protein operates within pyrimidine metabolism; CTP biosynthesis via de novo pathway; CTP from UDP: step 2/2. With respect to regulation, allosterically activated by GTP, when glutamine is the substrate; GTP has no effect on the reaction when ammonia is the substrate. The allosteric effector GTP functions by stabilizing the protein conformation that binds the tetrahedral intermediate(s) formed during glutamine hydrolysis. Inhibited by the product CTP, via allosteric rather than competitive inhibition. Its function is as follows. Catalyzes the ATP-dependent amination of UTP to CTP with either L-glutamine or ammonia as the source of nitrogen. Regulates intracellular CTP levels through interactions with the four ribonucleotide triphosphates. The polypeptide is CTP synthase (Bifidobacterium longum (strain NCC 2705)).